The chain runs to 294 residues: N-acetylmuramic acid 6-phosphate etherase (294 aa).

The SIS domain maps to 54 to 217; it reads VIKSFEEEGR…STASMIGVGK (164 aa). Glutamate 82 (proton donor) is an active-site residue. Glutamate 113 is a catalytic residue.

This sequence belongs to the GCKR-like family. MurNAc-6-P etherase subfamily. In terms of assembly, homodimer.

It carries out the reaction N-acetyl-D-muramate 6-phosphate + H2O = N-acetyl-D-glucosamine 6-phosphate + (R)-lactate. It participates in amino-sugar metabolism; N-acetylmuramate degradation. Its function is as follows. Specifically catalyzes the cleavage of the D-lactyl ether substituent of MurNAc 6-phosphate, producing GlcNAc 6-phosphate and D-lactate. The sequence is that of N-acetylmuramic acid 6-phosphate etherase from Bacillus cereus (strain ATCC 10987 / NRS 248).